A 66-amino-acid chain; its full sequence is Large ribosomal subunit protein bL31 (66 aa).

The Zn(2+) site is built by C16, C18, C36, and C39.

The protein belongs to the bacterial ribosomal protein bL31 family. Type A subfamily. Part of the 50S ribosomal subunit. Zn(2+) is required as a cofactor.

Its function is as follows. Binds the 23S rRNA. This is Large ribosomal subunit protein bL31 from Clostridioides difficile (strain 630) (Peptoclostridium difficile).